We begin with the raw amino-acid sequence, 690 residues long: Elongation factor G (690 aa).

The tr-type G domain maps to 8 to 283 (EYIRNIGICA…AVVGFLPSPI (276 aa)). GTP contacts are provided by residues 17–24 (AHIDAGKT), 81–85 (DTPGH), and 135–138 (NKMD).

This sequence belongs to the TRAFAC class translation factor GTPase superfamily. Classic translation factor GTPase family. EF-G/EF-2 subfamily.

The protein resides in the cytoplasm. In terms of biological role, catalyzes the GTP-dependent ribosomal translocation step during translation elongation. During this step, the ribosome changes from the pre-translocational (PRE) to the post-translocational (POST) state as the newly formed A-site-bound peptidyl-tRNA and P-site-bound deacylated tRNA move to the P and E sites, respectively. Catalyzes the coordinated movement of the two tRNA molecules, the mRNA and conformational changes in the ribosome. The protein is Elongation factor G of Rickettsia canadensis (strain McKiel).